The primary structure comprises 204 residues: LexA repressor (204 aa).

The segment at residues 29–49 (VREICKGVGLSSTSSVHGHLS) is a DNA-binding region (H-T-H motif). Active-site for autocatalytic cleavage activity residues include Ser126 and Lys163.

The protein belongs to the peptidase S24 family. In terms of assembly, homodimer.

The catalysed reaction is Hydrolysis of Ala-|-Gly bond in repressor LexA.. In terms of biological role, represses a number of genes involved in the response to DNA damage (SOS response), including recA and lexA. In the presence of single-stranded DNA, RecA interacts with LexA causing an autocatalytic cleavage which disrupts the DNA-binding part of LexA, leading to derepression of the SOS regulon and eventually DNA repair. The protein is LexA repressor of Clostridium novyi (strain NT).